We begin with the raw amino-acid sequence, 262 residues long: ATP synthase subunit a (262 aa).

The next 6 membrane-spanning stretches (helical) occupy residues 24–44 (AVHLDTLFFSLLAGVIFLFVF), 84–104 (VIAPLALTIFCWVFIMNAIDL), 129–149 (DISATLGMSICVFFLILFYTV), 165–185 (PFNHWVFIPVNFILETVTLLA), 194–214 (LFGNMYAGELIFILIAVMYMA), and 228–248 (LVWAIFHILVITLQAFIFMML).

It belongs to the ATPase A chain family. In terms of assembly, F-type ATPases have 2 components, CF(1) - the catalytic core - and CF(0) - the membrane proton channel. CF(1) has five subunits: alpha(3), beta(3), gamma(1), delta(1), epsilon(1). CF(0) has three main subunits: a(1), b(2) and c(9-12). The alpha and beta chains form an alternating ring which encloses part of the gamma chain. CF(1) is attached to CF(0) by a central stalk formed by the gamma and epsilon chains, while a peripheral stalk is formed by the delta and b chains.

The protein localises to the cell inner membrane. Its function is as follows. Key component of the proton channel; it plays a direct role in the translocation of protons across the membrane. The chain is ATP synthase subunit a from Actinobacillus pleuropneumoniae serotype 7 (strain AP76).